A 444-amino-acid polypeptide reads, in one-letter code: MLPPKLHALFCLCSCLTLVHPIDWQDLNPVAHIRSSAWANKIQALMAAASIRQSRIPKGNGSYSVGCTDLMFDYTNKGTFLRLYYPSQEDDHSDTLWIPNKEYFFGLSKYLGTPWLMGKILSFFFGSVTTPANWNSPLRTGEKYPLIVFSHGLGAFRTIYSAIGIDLASHGFIVAAIEHRDGSASATYYFKDQSAAEIGNKSWSYLQELKPGDEEIHVRNEQVQKRAKECSQALNLILDIDHGRPIKNVLDLEFDVEQLKDSIDRDKIAVIGHSFGGATVLQALSEDQRFRCGIALDAWMLPLDDAIYSRIPQPLFFINSERFQFPENIKKMKKCYSPDKERKMITIRGSVHQNFADFTFTTGKIVGYIFTLKGDIDSNVAIDLCNKASLAFLQKHLGLRKDFDQWDSLIEGKDENLMPGTNINITNEHDTLQNSPEAEKSNLD.

Residues 1-21 (MLPPKLHALFCLCSCLTLVHP) form the signal peptide. Asn-60 and Asn-200 each carry an N-linked (GlcNAc...) asparagine glycan. Ser-274 (nucleophile) is an active-site residue. Residues Asp-297 and His-352 each act as charge relay system in the active site. Asn-424 is a glycosylation site (N-linked (GlcNAc...) asparagine).

Belongs to the AB hydrolase superfamily. Lipase family. N-glycosylated. As to expression, plasma.

Its subcellular location is the secreted. The protein resides in the extracellular space. The enzyme catalyses a 1-O-alkyl-2-acetyl-sn-glycero-3-phosphocholine + H2O = a 1-O-alkyl-sn-glycero-3-phosphocholine + acetate + H(+). The catalysed reaction is 1-O-decyl-2-acetyl-sn-glycero-3-phosphocholine + H2O = 1-O-decyl-sn-glycero-3-phosphocholine + acetate + H(+). It carries out the reaction 1-O-dodecyl-2-acetyl-sn-glycero-3-phosphocholine + H2O = 1-O-dodecyl-sn-glycero-3-phosphocholine + acetate + H(+). It catalyses the reaction 1-O-tetradecyl-2-acetyl-sn-glycero-3-phosphocholine + H2O = 1-O-tetradecyl-sn-glycero-3-phosphocholine + acetate + H(+). The enzyme catalyses 1-O-hexadecyl-2-acetyl-sn-glycero-3-phosphocholine + H2O = 1-O-hexadecyl-sn-glycero-3-phosphocholine + acetate + H(+). The catalysed reaction is 1-O-octadecyl-2-acetyl-sn-glycero-3-phosphocholine + H2O = 1-O-octadecyl-sn-glycero-3-phosphocholine + acetate + H(+). It carries out the reaction 1-hexadecanoyl-2-acetyl-sn-glycero-3-phosphocholine + H2O = 1-hexadecanoyl-sn-glycero-3-phosphocholine + acetate + H(+). It catalyses the reaction 1-hexadecanoyl-2-propionyl-sn-glycero-3-phosphocholine + H2O = propanoate + 1-hexadecanoyl-sn-glycero-3-phosphocholine + H(+). The enzyme catalyses 1-hexadecanoyl-2-butanoyl-sn-glycero-3-phosphocholine + H2O = butanoate + 1-hexadecanoyl-sn-glycero-3-phosphocholine + H(+). The catalysed reaction is 1-hexadecanoyl-2-pentanoyl-sn-glycero-3-phosphocholine + H2O = pentanoate + 1-hexadecanoyl-sn-glycero-3-phosphocholine + H(+). It carries out the reaction 1-hexadecanoyl-2-glutaroyl-sn-glycero-3-phosphocholine + H2O = glutarate + 1-hexadecanoyl-sn-glycero-3-phosphocholine + H(+). It catalyses the reaction 1-hexadecanoyl-2-(5-oxopentanoyl)-sn-glycero-3-phosphocholine + H2O = 5-oxopentanoate + 1-hexadecanoyl-sn-glycero-3-phosphocholine + H(+). The enzyme catalyses 1-hexadecanoyl-2-(9-oxononanoyl)-sn-glycero-3-phosphocholine + H2O = 9-oxononanoate + 1-hexadecanoyl-sn-glycero-3-phosphocholine + H(+). The catalysed reaction is 1-hexadecanoyl-2-[9-hydroperoxy-(10E-octadecenoyl)]-sn-glycero-3-phosphocholine + H2O = 9-hydroperoxy-10E-octadecenoate + 1-hexadecanoyl-sn-glycero-3-phosphocholine + H(+). It carries out the reaction 1-hexadecanoyl-2-(10-hydroperoxy-8E-octadecenoyl)-sn-glycero-3-phosphocholine + H2O = 10-hydroperoxy-(8E)-octadecenoate + 1-hexadecanoyl-sn-glycero-3-phosphocholine + H(+). Functionally, lipoprotein-associated calcium-independent phospholipase A2 involved in phospholipid catabolism during inflammatory and oxidative stress response. At the lipid-aqueous interface, hydrolyzes the ester bond of fatty acyl group attached at sn-2 position of phospholipids (phospholipase A2 activity). Specifically targets phospholipids with a short-chain fatty acyl group at sn-2 position. Can hydrolyze phospholipids with long fatty acyl chains, only if they carry oxidized functional groups. Hydrolyzes and inactivates platelet-activating factor (PAF, 1-O-alkyl-2-acetyl-sn-glycero-3-phosphocholine), a potent pro-inflammatory signaling lipid that acts through PTAFR on various innate immune cells. Hydrolyzes oxidatively truncated phospholipids carrying an aldehyde group at omega position, preventing their accumulation in low-density lipoprotein (LDL) particles and uncontrolled pro-inflammatory effects. As part of high-density lipoprotein (HDL) particles, can hydrolyze phospholipids having long-chain fatty acyl hydroperoxides at sn-2 position and protect against potential accumulation of these oxylipins in the vascular wall. Catalyzes the release from membrane phospholipids of F2-isoprostanes, lipid biomarkers of cellular oxidative damage. The chain is Platelet-activating factor acetylhydrolase (PLA2G7) from Canis lupus familiaris (Dog).